The chain runs to 198 residues: Molybdenum cofactor guanylyltransferase (198 aa).

Residues 14–16 (LAG), K27, D73, and D103 contribute to the GTP site. Residue D103 participates in Mg(2+) binding.

It belongs to the MobA family. As to quaternary structure, monomer. It depends on Mg(2+) as a cofactor.

The protein resides in the cytoplasm. The enzyme catalyses Mo-molybdopterin + GTP + H(+) = Mo-molybdopterin guanine dinucleotide + diphosphate. Its function is as follows. Transfers a GMP moiety from GTP to Mo-molybdopterin (Mo-MPT) cofactor (Moco or molybdenum cofactor) to form Mo-molybdopterin guanine dinucleotide (Mo-MGD) cofactor. The protein is Molybdenum cofactor guanylyltransferase of Pseudomonas paraeruginosa (strain DSM 24068 / PA7) (Pseudomonas aeruginosa (strain PA7)).